Here is a 225-residue protein sequence, read N- to C-terminus: Class E basic helix-loop-helix protein 23 (225 aa).

A disordered region spans residues 35–104 (EAARGYGTPG…PREQRSLRLS (70 aa)). Residues 100-154 (SLRLSINARERRRMHDLNDALDGLRAVIPYAHSPSVRKLSKIATLLLAKNYILMQ) enclose the bHLH domain.

The protein resides in the nucleus. Functionally, may function as transcriptional repressor. May modulate the expression of genes required for the differentiation and/or maintenance of pancreatic and neuronal cell types. May be important for rod bipolar cell maturation. This Homo sapiens (Human) protein is Class E basic helix-loop-helix protein 23 (BHLHE23).